Here is a 199-residue protein sequence, read N- to C-terminus: Putative acetyltransferase SAV2555 (199 aa).

It belongs to the transferase hexapeptide repeat family.

The polypeptide is Putative acetyltransferase SAV2555 (Staphylococcus aureus (strain Mu50 / ATCC 700699)).